The chain runs to 559 residues: Hepatocyte nuclear factor 1-alpha (559 aa).

Residues 13-44 form the HNF-p1 domain; it reads GPGRLSALQEQLIWALLGSGLSREVLVHALGE. A dimerization region spans residues 14-43; that stretch reads PGRLSALQEQLIWALLGSGLSREVLVHALG. The segment covering 49–62 has biased composition (basic and acidic residues); it reads RVTPGAEKGDRGDG. Residues 49–73 are disordered; sequence RVTPGAEKGDRGDGESSEEGEMDFP. The region spanning 78 to 173 is the POU-specific atypical domain; the sequence is QELEALAPEE…ISQQFTNARH (96 aa). Interaction with DNA regions lie at residues 121 to 123, 134 to 140, 146 to 149, 192 to 195, 252 to 254, and 259 to 262; these read QRE, HLSQHLN, KNQK, RFKW, RVY, and NRRK. The short motif at 186 to 194 is the Nuclear localization signal element; that stretch reads RKGRRNRFK. A DNA-binding region (homeobox; HNF1-type) is located at residues 188-268; the sequence is GRRNRFKWGP…NRRKEEAFRH (81 aa). The segment at 492-559 is disordered; the sequence is TDPEEQTDQP…IPAQMVSTAQ (68 aa). Residues 499–522 show a composition bias toward polar residues; sequence DQPIQEDSLHLQSPSPVPVSSGNL.

It belongs to the HNF1 homeobox family. Binds DNA as a dimer. Expressed in liver, intestine, spleen and kidney.

It localises to the nucleus. Functionally, transcriptional activator that regulates the tissue specific expression of multiple genes, especially in pancreas and liver. Binds to the promoter of the albumin gene. This is Hepatocyte nuclear factor 1-alpha (hnf1a) from Salmo salar (Atlantic salmon).